The sequence spans 178 residues: Disulfide bond formation protein B (178 aa).

Residues 1 to 14 lie on the Cytoplasmic side of the membrane; that stretch reads MLSFFKTLSMGRSG. A helical transmembrane segment spans residues 15-31; the sequence is WLLLAFSALVLELVALY. Over 32–49 the chain is Periplasmic; sequence FQYGMQLQPCVMCVYERV. A disulfide bridge links cysteine 41 with cysteine 44. Residues 50-65 traverse the membrane as a helical segment; the sequence is ALGGILFAGIIGAIAP. Residues 66-72 lie on the Cytoplasmic side of the membrane; sequence SSWFFRF. A helical transmembrane segment spans residues 73-90; the sequence is LGIIIGLGASVKGFLLAL. The Periplasmic segment spans residues 91 to 145; the sequence is KHVDYQLNPAPWNQCAYLPEFPQTLPLDQWFPYLFKPIGSCSDIQWSFLGFSMAQ. Cysteine 105 and cysteine 131 form a disulfide bridge. The chain crosses the membrane as a helical span at residues 146 to 164; the sequence is WILVMFAFYSILLAIILIS. Residues 165-178 are Cytoplasmic-facing; sequence QVKAGKPKHREIFR.

This sequence belongs to the DsbB family.

The protein resides in the cell inner membrane. In terms of biological role, required for disulfide bond formation in some periplasmic proteins. Acts by oxidizing the DsbA protein. The polypeptide is Disulfide bond formation protein B (Mannheimia succiniciproducens (strain KCTC 0769BP / MBEL55E)).